A 3620-amino-acid chain; its full sequence is Cubilin (3620 aa).

Positions 1 to 20 are cleaved as a signal peptide; it reads MSSPFLWSLIILLTFAESNG. Residues 21–32 constitute a propeptide, removed in mature form; sequence EAGGFELQRQKR. The interval 39–46 is interaction with AMN; the sequence is PRMATERG. Asn-102 carries an N-linked (GlcNAc...) asparagine glycan. Residues 129–165 form the EGF-like 1 domain; the sequence is DKKVCSSNPCQNGGTCLNLHDSFFCICPSQWKGPLCS. Cystine bridges form between Cys-133–Cys-144, Cys-138–Cys-153, Cys-155–Cys-164, Cys-171–Cys-187, Cys-181–Cys-196, and Cys-198–Cys-207. In terms of domain architecture, EGF-like 2; calcium-binding spans 167–208; the sequence is DVNECQIYSGTPLGCQNGATCENTAGSYSCLCSPETHGPQCA. Residue Asn-253 is glycosylated (N-linked (GlcNAc...) asparagine). The EGF-like 3; calcium-binding domain maps to 260–301; it reads DIDECNLQHAPCSPLVQCFNTQGSFYCGACPTGWQGNGYSCQ. 19 disulfide bridges follow: Cys-264/Cys-277, Cys-271/Cys-286, Cys-289/Cys-300, Cys-306/Cys-321, Cys-313/Cys-330, Cys-333/Cys-344, Cys-350/Cys-363, Cys-357/Cys-373, Cys-396/Cys-406, Cys-401/Cys-415, Cys-417/Cys-426, Cys-433/Cys-444, Cys-438/Cys-453, Cys-455/Cys-464, Cys-471/Cys-497, Cys-524/Cys-546, Cys-587/Cys-613, Cys-640/Cys-662, and Cys-705/Cys-730. The 44-residue stretch at 302–345 folds into the EGF-like 4; calcium-binding domain; the sequence is DIDECKINNGGCSVVPPVMCVNTLGSYHCQACPPGYQGDGRVCT. 2 consecutive EGF-like domains span residues 346–382 and 392–427; these read VIDICSVNNGGCHPEASCSSVLGSLPLCTCLPGYTGN and LSDTCLSHPCLNGQCIETVSGYLCKCESGWAGINCT. Residue Asn-425 is glycosylated (N-linked (GlcNAc...) asparagine). The EGF-like 7; calcium-binding domain maps to 429 to 465; sequence NINECLSNPCFNGGTCVDGVNAFSCECTRFWTGFLCQ. CUB domains lie at 471 to 583, 587 to 699, 705 to 812, 813 to 924, 928 to 1038, 1044 to 1158, 1162 to 1274, 1275 to 1386, 1388 to 1503, 1507 to 1616, 1617 to 1731, 1735 to 1847, and 1849 to 1960; these read CGGS…WETQ, CGGI…YLTS, CGGN…YQVA, CGGE…FSAA, CGEI…YEAT, CMED…WDGS, CGGN…YQQT, CRNV…WFIH, CGGE…WQAV, CGGI…FNQV, CGGH…YAAS, CGGT…FTKI, and GNDN…WFAV. N-linked (GlcNAc...) asparagine glycosylation is found at Asn-708 and Asn-745. A disulfide bridge connects residues Cys-757 and Cys-775. The N-linked (GlcNAc...) asparagine glycan is linked to Asn-777. Cys-813 and Cys-838 are disulfide-bonded. A glycan (N-linked (GlcNAc...) asparagine) is linked at Asn-853. Intrachain disulfides connect Cys-865-Cys-887 and Cys-928-Cys-954. Asn-953 carries N-linked (GlcNAc...) asparagine glycosylation. Glu-976 provides a ligand contact to Ca(2+). Asn-980 carries an N-linked (GlcNAc...) asparagine glycan. The cysteines at positions 981 and 1001 are disulfide-linked. Ca(2+)-binding residues include Asp-984, Asp-1023, Asp-1025, and Leu-1026. Cys-1044 and Cys-1070 are disulfide-bonded. Ca(2+) contacts are provided by Glu-1092, Asp-1102, and Asp-1143. Cys-1099 and Cys-1121 are oxidised to a cystine. A disulfide bridge links Cys-1162 with Cys-1188. The N-linked (GlcNAc...) asparagine glycan is linked to Asn-1165. Glu-1210 serves as a coordination point for Ca(2+). Residue Asn-1214 is glycosylated (N-linked (GlcNAc...) asparagine). A disulfide bridge links Cys-1215 with Cys-1237. Residues Asp-1218, Asp-1259, and Gln-1262 each coordinate Ca(2+). Cys-1275 and Cys-1303 are disulfide-bonded. Asn-1304 and Asn-1316 each carry an N-linked (GlcNAc...) asparagine glycan. Ca(2+) is bound at residue Glu-1325. N-linked (GlcNAc...) asparagine glycosylation is present at Asn-1329. An intrachain disulfide couples Cys-1330 to Cys-1348. Residues Asp-1333, Asp-1370, and Val-1372 each coordinate Ca(2+). 2 cysteine pairs are disulfide-bonded: Cys-1388-Cys-1414 and Cys-1441-Cys-1463. A glycan (N-linked (GlcNAc...) asparagine) is linked at Asn-1497. Cys-1507 and Cys-1533 are disulfide-bonded. N-linked (GlcNAc...) asparagine glycosylation occurs at Asn-1548. Cystine bridges form between Cys-1560–Cys-1578, Cys-1617–Cys-1644, Cys-1672–Cys-1694, Cys-1735–Cys-1761, and Cys-1788–Cys-1809. N-linked (GlcNAc...) asparagine glycosylation is present at Asn-1643. Residues Asn-1799, Asn-1816, and Asn-1882 are each glycosylated (N-linked (GlcNAc...) asparagine). Cys-1902 and Cys-1924 are oxidised to a cystine. Asn-1961 carries an N-linked (GlcNAc...) asparagine glycan. 2 cysteine pairs are disulfide-bonded: Cys-1975–Cys-2003 and Cys-2029–Cys-2051. CUB domains are found at residues 1975–2088, 2089–2210, 2214–2331, 2333–2445, 2449–2562, 2567–2684, 2686–2798, 2802–2916, 2917–3032, 3034–3147, 3154–3271, 3275–3392, 3392–3504, and 3508–3620; these read CGGF…FHKS, CGGY…YEAK, CGGN…YAIA, CGGR…FESS, CGGE…YTSS, CGGS…YSFT, CGGI…WNTQ, CGGI…FVSR, CGGN…YKIT, CGGV…FQQT, CGGY…YTTV, CGGT…IAGC, CNRE…WTSS, and CGGT…TWDS. N-linked (GlcNAc...) asparagine glycans are attached at residues Asn-2082 and Asn-2114. 3 cysteine pairs are disulfide-bonded: Cys-2089–Cys-2115, Cys-2214–Cys-2244, and Cys-2272–Cys-2294. A glycan (N-linked (GlcNAc...) asparagine) is linked at Asn-2317. A disulfide bridge links Cys-2333 with Cys-2360. Residues Asn-2383 and Asn-2397 are each glycosylated (N-linked (GlcNAc...) asparagine). 3 disulfide bridges follow: Cys-2387–Cys-2408, Cys-2449–Cys-2475, and Cys-2502–Cys-2524. N-linked (GlcNAc...) asparagine glycans are attached at residues Asn-2528, Asn-2578, Asn-2589, and Asn-2607. A disulfide bridge connects residues Cys-2567 and Cys-2596. Intrachain disulfides connect Cys-2625/Cys-2646, Cys-2686/Cys-2712, Cys-2739/Cys-2761, Cys-2802/Cys-2828, Cys-2857/Cys-2880, Cys-2917/Cys-2943, and Cys-2974/Cys-2996. Asn-2810 carries N-linked (GlcNAc...) asparagine glycosylation. N-linked (GlcNAc...) asparagine glycosylation is found at Asn-2920, Asn-2942, and Asn-2986. Thr-3005 is modified (phosphothreonine). 2 disulfides stabilise this stretch: Cys-3034–Cys-3061 and Cys-3088–Cys-3110. Asn-3039, Asn-3100, and Asn-3122 each carry an N-linked (GlcNAc...) asparagine glycan. Disulfide bonds link Cys-3154–Cys-3182 and Cys-3212–Cys-3234. N-linked (GlcNAc...) asparagine glycosylation is found at Asn-3265, Asn-3280, and Asn-3292. 2 disulfides stabilise this stretch: Cys-3275-Cys-3303 and Cys-3329-Cys-3351. N-linked (GlcNAc...) asparagine glycosylation occurs at Asn-3354. Cys-3392 and Cys-3418 form a disulfide bridge. 3 N-linked (GlcNAc...) asparagine glycosylation sites follow: Asn-3427, Asn-3454, and Asn-3530. Intrachain disulfides connect Cys-3445–Cys-3467, Cys-3508–Cys-3534, and Cys-3561–Cys-3583.

Interacts with AMN. Component of the cubam complex composed of one CUBN trimer and one AMN chain. The cubam complex can dimerize. Interacts with LRP2 in a dual-receptor complex in a calcium-dependent manner. Found in a complex with PID1/PCLI1, LRP1 and CUBNI. Interacts with LRP1 and PID1/PCLI1. Post-translationally, the precursor is cleaved by a trans-Golgi proteinase furin, removing a propeptide. In terms of processing, N-glycosylated. In terms of tissue distribution, detected in kidney cortex (at protein level). Detected in kidney, duodenum and jejunum.

Its subcellular location is the apical cell membrane. The protein localises to the cell membrane. The protein resides in the membrane. It is found in the coated pit. It localises to the endosome. Its subcellular location is the lysosome membrane. Functionally, endocytic receptor which plays a role in lipoprotein, vitamin and iron metabolism by facilitating their uptake. Acts together with LRP2 to mediate endocytosis of high-density lipoproteins, GC, hemoglobin, ALB, TF and SCGB1A1. Acts together with AMN to mediate endocytosis of the CBLIF-cobalamin complex. Binds to ALB, MB, Kappa and lambda-light chains, TF, hemoglobin, GC, SCGB1A1, APOA1, high density lipoprotein, and the CBLIF-cobalamin complex. Ligand binding requires calcium. Serves as important transporter in several absorptive epithelia, including intestine, renal proximal tubules and embryonic yolk sac. May play an important role in the development of the peri-implantation embryo through internalization of APOA1 and cholesterol. Binds to LGALS3 at the maternal-fetal interface. The sequence is that of Cubilin (CUBN) from Canis lupus familiaris (Dog).